The following is a 168-amino-acid chain: Protein archease (168 aa).

Ala-2 is subject to N-acetylalanine. Ca(2+)-binding residues include Asp-39, Asp-167, and Ile-168.

It belongs to the archease family. As to quaternary structure, component of the tRNA-splicing ligase complex.

Its function is as follows. Component of the tRNA-splicing ligase complex required to facilitate the enzymatic turnover of catalytic subunit RTCB. Together with DDX1, acts by facilitating the guanylylation of RTCB, a key intermediate step in tRNA ligation. The protein is Protein archease (Zbtb8os) of Mus musculus (Mouse).